The primary structure comprises 190 residues: Adenine phosphoribosyltransferase (190 aa).

It belongs to the purine/pyrimidine phosphoribosyltransferase family. As to quaternary structure, homodimer.

It localises to the cytoplasm. It carries out the reaction AMP + diphosphate = 5-phospho-alpha-D-ribose 1-diphosphate + adenine. It participates in purine metabolism; AMP biosynthesis via salvage pathway; AMP from adenine: step 1/1. In terms of biological role, catalyzes a salvage reaction resulting in the formation of AMP, that is energically less costly than de novo synthesis. The chain is Adenine phosphoribosyltransferase from Cupriavidus necator (strain ATCC 17699 / DSM 428 / KCTC 22496 / NCIMB 10442 / H16 / Stanier 337) (Ralstonia eutropha).